Here is a 271-residue protein sequence, read N- to C-terminus: 4-hydroxy-tetrahydrodipicolinate reductase (271 aa).

Residues 11-16 (GGSGRM) and glutamate 37 each bind NAD(+). Arginine 38 provides a ligand contact to NADP(+). NAD(+) is bound by residues 101 to 103 (GTT) and 125 to 128 (APNM). The active-site Proton donor/acceptor is histidine 158. Residue histidine 159 coordinates (S)-2,3,4,5-tetrahydrodipicolinate. Lysine 162 serves as the catalytic Proton donor. (S)-2,3,4,5-tetrahydrodipicolinate is bound at residue 168–169 (GT).

This sequence belongs to the DapB family.

It localises to the cytoplasm. The enzyme catalyses (S)-2,3,4,5-tetrahydrodipicolinate + NAD(+) + H2O = (2S,4S)-4-hydroxy-2,3,4,5-tetrahydrodipicolinate + NADH + H(+). It carries out the reaction (S)-2,3,4,5-tetrahydrodipicolinate + NADP(+) + H2O = (2S,4S)-4-hydroxy-2,3,4,5-tetrahydrodipicolinate + NADPH + H(+). The protein operates within amino-acid biosynthesis; L-lysine biosynthesis via DAP pathway; (S)-tetrahydrodipicolinate from L-aspartate: step 4/4. Its function is as follows. Catalyzes the conversion of 4-hydroxy-tetrahydrodipicolinate (HTPA) to tetrahydrodipicolinate. The sequence is that of 4-hydroxy-tetrahydrodipicolinate reductase from Shewanella halifaxensis (strain HAW-EB4).